Reading from the N-terminus, the 363-residue chain is MSKTTIALLFGGKSTEHEISIISARSISGAIDRERYRVVPVYITHEGAWFSGDSAAEILSLDLSSIMRKSSVGNTETLLREMIRNSAEKPFDFNFRAAGIDVVFIALHGSYGEDGRVQGLLDTMGIPYTGCGVSASAIAMDKALTKLCAADAGVATAPSITLDADSYLADPEPVHELVDSTFGYPLFVKPASLGSSVGISKVHLPAALPEALKVACSYDRKILVEAAVSGKEIEVAVLGNDRPVASVPGEVEPGSDFYDFQDKYIHNTAKTFIPARLPDKLLDSVRCSAITVYKALGCRGMSRVDFFVNEENGSIVLNEINTIPGFTDISMYPKLFEASGIPFTALIDKLLHYAQEKPEAAGR.

Residues 146–352 enclose the ATP-grasp domain; that stretch reads KLCAADAGVA…FTALIDKLLH (207 aa). Residue 179–234 coordinates ATP; sequence DSTFGYPLFVKPASLGSSVGISKVHLPAALPEALKVACSYDRKILVEAAVSGKEIE. D305, E319, and N321 together coordinate Mg(2+).

The protein belongs to the D-alanine--D-alanine ligase family. The cofactor is Mg(2+). Mn(2+) is required as a cofactor.

It localises to the cytoplasm. It carries out the reaction 2 D-alanine + ATP = D-alanyl-D-alanine + ADP + phosphate + H(+). It participates in cell wall biogenesis; peptidoglycan biosynthesis. Its function is as follows. Cell wall formation. In Chlorobium limicola (strain DSM 245 / NBRC 103803 / 6330), this protein is D-alanine--D-alanine ligase.